The chain runs to 85 residues: Large ribosomal subunit protein bL31B (85 aa).

It belongs to the bacterial ribosomal protein bL31 family. Type B subfamily. Part of the 50S ribosomal subunit.

This chain is Large ribosomal subunit protein bL31B, found in Staphylococcus haemolyticus (strain JCSC1435).